The sequence spans 242 residues: ATP-dependent dethiobiotin synthetase BioD (242 aa).

Residue 12–17 (EVGKTV) participates in ATP binding. Threonine 16 contributes to the Mg(2+) binding site. Residue lysine 37 is part of the active site. Serine 41 provides a ligand contact to substrate. ATP contacts are provided by residues aspartate 51 and 112 to 115 (EGAG). Residues aspartate 51 and glutamate 112 each coordinate Mg(2+).

It belongs to the dethiobiotin synthetase family. As to quaternary structure, homodimer. Mg(2+) is required as a cofactor.

It localises to the cytoplasm. It carries out the reaction (7R,8S)-7,8-diammoniononanoate + CO2 + ATP = (4R,5S)-dethiobiotin + ADP + phosphate + 3 H(+). It functions in the pathway cofactor biosynthesis; biotin biosynthesis; biotin from 7,8-diaminononanoate: step 1/2. Catalyzes a mechanistically unusual reaction, the ATP-dependent insertion of CO2 between the N7 and N8 nitrogen atoms of 7,8-diaminopelargonic acid (DAPA, also called 7,8-diammoniononanoate) to form a ureido ring. The chain is ATP-dependent dethiobiotin synthetase BioD from Bacillus cereus (strain G9842).